The sequence spans 392 residues: MERLSGCRLRPWMLLLLLFPVQGRQKDSGSKWKVFIDQINRALENYEPCSSQNCSCYHGVIEEDLTPFRGGISRKMMAEVVRRRLGTHYQIIKHRLFREDDCMFPSRCSGVEHFILEVIRRLPDMEMVINVRDYPQVPKWMEPTIPVFSFSKTSEYHDIMYPAWTFWEGGPAVWPLYPTGLGRWDLFREDLLRSAAQWPWEKKNSTAYFRGSRTSPERDPLILLSRKNPKLVDAEYTKNQAWKSMKDTLGKPAAKDVHLIDHCKYKYLFNFRGVAASFRFKHLFLCGSLVFHVGDEWVEFFYPQLKPWVHYIPVKTDLSDVQELLQFVKANDDLAQEIAKRGSQFIINHLQMDDITCYWENLLTEYSKFLSYNVTRRKDYYQIIPRRLKTEL.

An N-terminal signal peptide occupies residues 1 to 23 (MERLSGCRLRPWMLLLLLFPVQG). 4 cysteine pairs are disulfide-bonded: Cys-49–Cys-56, Cys-54–Cys-357, Cys-102–Cys-108, and Cys-263–Cys-286. N-linked (GlcNAc...) asparagine glycosylation is present at Asn-53. Residues 103 to 107 (MFPSR) form an interaction with the consensus sequence C-X-S-X-[PA]-C in peptide substrates region. The Proton donor/acceptor role is filled by Asp-133. The interaction with the consensus sequence C-X-S-X-[PA]-C in peptide substrates stretch occupies residues 172–178 (AVWPLYP). Tyr-177 provides a ligand contact to UDP-alpha-D-glucose. Asn-204 is a glycosylation site (N-linked (GlcNAc...) asparagine). Residues Ser-212, Arg-218, and 274–279 (VAASFR) contribute to the UDP-alpha-D-glucose site. Residue Asn-373 is glycosylated (N-linked (GlcNAc...) asparagine). The short motif at 389 to 392 (KTEL) is the Prevents secretion from ER element.

The protein belongs to the glycosyltransferase 90 family.

The protein localises to the endoplasmic reticulum lumen. The catalysed reaction is L-seryl-[EGF-like domain protein] + UDP-alpha-D-xylose = 3-O-(beta-D-xylosyl)-L-seryl-[EGF-like domain protein] + UDP + H(+). The enzyme catalyses L-seryl-[EGF-like domain protein] + UDP-alpha-D-glucose = 3-O-(beta-D-glucosyl)-L-seryl-[EGF-like domain protein] + UDP + H(+). It functions in the pathway protein modification; protein glycosylation. Its function is as follows. Dual specificity glycosyltransferase that catalyzes the transfer of glucose and xylose from UDP-glucose and UDP-xylose, respectively, to a serine residue found in the consensus sequence of C-X-S-X-P-C. Specifically targets extracellular EGF repeats of protein such as CRB2, F7, F9 and NOTCH2. Acts as a positive regulator of Notch signaling by mediating O-glucosylation of Notch, leading to regulate muscle development. Notch glucosylation does not affect Notch ligand binding. Required during early development to promote gastrulation: acts by mediating O-glucosylation of CRB2, which is required for CRB2 localization to the cell membrane. The protein is Protein O-glucosyltransferase 1 (Poglut1) of Rattus norvegicus (Rat).